A 318-amino-acid chain; its full sequence is Aspartate carbamoyltransferase catalytic subunit (318 aa).

Positions 67 and 68 each coordinate carbamoyl phosphate. K95 provides a ligand contact to L-aspartate. Carbamoyl phosphate-binding residues include R117, H145, and Q148. L-aspartate-binding residues include R178 and R236. The carbamoyl phosphate site is built by G277 and P278.

It belongs to the aspartate/ornithine carbamoyltransferase superfamily. ATCase family. Heterododecamer (2C3:3R2) of six catalytic PyrB chains organized as two trimers (C3), and six regulatory PyrI chains organized as three dimers (R2).

The catalysed reaction is carbamoyl phosphate + L-aspartate = N-carbamoyl-L-aspartate + phosphate + H(+). It participates in pyrimidine metabolism; UMP biosynthesis via de novo pathway; (S)-dihydroorotate from bicarbonate: step 2/3. Its function is as follows. Catalyzes the condensation of carbamoyl phosphate and aspartate to form carbamoyl aspartate and inorganic phosphate, the committed step in the de novo pyrimidine nucleotide biosynthesis pathway. The protein is Aspartate carbamoyltransferase catalytic subunit of Roseiflexus castenholzii (strain DSM 13941 / HLO8).